A 330-amino-acid chain; its full sequence is uncharacterized protein (330 aa).

Belongs to the ornithine cyclodeaminase/mu-crystallin family.

Its subcellular location is the cytoplasm. This is an uncharacterized protein from Schizosaccharomyces pombe (strain 972 / ATCC 24843) (Fission yeast).